Here is a 273-residue protein sequence, read N- to C-terminus: Formamidopyrimidine-DNA glycosylase (273 aa).

Pro2 acts as the Schiff-base intermediate with DNA in catalysis. Residue Glu3 is the Proton donor of the active site. The Proton donor; for beta-elimination activity role is filled by Lys59. DNA-binding residues include His92 and Arg111. Residues 239-273 (KVYGKTDEPCVVCGTPIEKIKLNGRGTHFCPNCQK) form an FPG-type zinc finger. Arg263 functions as the Proton donor; for delta-elimination activity in the catalytic mechanism.

The protein belongs to the FPG family. In terms of assembly, monomer. Requires Zn(2+) as cofactor.

It catalyses the reaction Hydrolysis of DNA containing ring-opened 7-methylguanine residues, releasing 2,6-diamino-4-hydroxy-5-(N-methyl)formamidopyrimidine.. The catalysed reaction is 2'-deoxyribonucleotide-(2'-deoxyribose 5'-phosphate)-2'-deoxyribonucleotide-DNA = a 3'-end 2'-deoxyribonucleotide-(2,3-dehydro-2,3-deoxyribose 5'-phosphate)-DNA + a 5'-end 5'-phospho-2'-deoxyribonucleoside-DNA + H(+). Functionally, involved in base excision repair of DNA damaged by oxidation or by mutagenic agents. Acts as a DNA glycosylase that recognizes and removes damaged bases. Has a preference for oxidized purines, such as 7,8-dihydro-8-oxoguanine (8-oxoG). Has AP (apurinic/apyrimidinic) lyase activity and introduces nicks in the DNA strand. Cleaves the DNA backbone by beta-delta elimination to generate a single-strand break at the site of the removed base with both 3'- and 5'-phosphates. In Listeria monocytogenes serovar 1/2a (strain ATCC BAA-679 / EGD-e), this protein is Formamidopyrimidine-DNA glycosylase.